Here is a 378-residue protein sequence, read N- to C-terminus: Mannitol-1-phosphate 5-dehydrogenase (378 aa).

Ser4 to Gly15 serves as a coordination point for NAD(+).

It belongs to the mannitol dehydrogenase family.

It catalyses the reaction D-mannitol 1-phosphate + NAD(+) = beta-D-fructose 6-phosphate + NADH + H(+). This Streptococcus pneumoniae (strain CGSP14) protein is Mannitol-1-phosphate 5-dehydrogenase.